The chain runs to 149 residues: MIKKKNKKRYTEVSALGKYIPMSTHKARRVIDQIRGRSYEETLMILELMPYRACYPILKLISSAAANGIHNMNFDETSLIISKAEVNEGPTAKKFKPRAKGQSYPIKRSTCHITIVLRDISLNEKYEEYIRKPWALLEKSNETEIRKRN.

The protein belongs to the universal ribosomal protein uL22 family. Part of the 50S ribosomal subunit.

It localises to the plastid. The protein localises to the chloroplast. In terms of biological role, this protein binds specifically to 23S rRNA. Its function is as follows. The globular domain of the protein is located near the polypeptide exit tunnel on the outside of the subunit, while an extended beta-hairpin is found that lines the wall of the exit tunnel in the center of the 70S ribosome. The chain is Large ribosomal subunit protein uL22c (rpl22-A) from Pelargonium hortorum (Common geranium).